Reading from the N-terminus, the 349-residue chain is MKLQILLLALVLIAVEANAVKQGINATIPALIVFGDSIMDTGNNNNLPTLLKCNFPPYGKDYPGGDATGRFSDGRVPSDLIAEKLGLAKTLPAYMNSYLKPEDLLKGVTFASRGTGYDPLTAKIMSVISVWDQLIYFKEYISKIKRHFGEEKAKDILEHSFFLVVSSSNDLAHTYLAQAHRYDRTSYANFLADSAVHFVRELHKLGARKIGVFSAVPVGCVPLQRTVFGGFFTRGCNEPLNNMAKQFNARLSPALDSLDKELDGVILYINVYDTLFDMIQHPKKYGFDVADKGCCGKGLLTISYLCNSLNPFTCSNSSSYIFWDSYHPSERAYQVIVDNLLDKYLSKVY.

The signal sequence occupies residues 1–19 (MKLQILLLALVLIAVEANA). A glycan (N-linked (GlcNAc...) asparagine) is linked at N25. The active-site Nucleophile is the S37. N-linked (GlcNAc...) asparagine glycosylation occurs at N316. Active-site residues include D324 and H327.

The protein belongs to the 'GDSL' lipolytic enzyme family.

Its subcellular location is the secreted. This is GDSL esterase/lipase At1g58525 from Arabidopsis thaliana (Mouse-ear cress).